The following is a 731-amino-acid chain: Elongation factor 2 (731 aa).

The tr-type G domain occupies 19 to 260; it reads KHIRNIGIVA…MVVHHLPNPL (242 aa). Residues 28–35, 94–98, and 148–151 each bind GTP; these read AHIDHGKT, DTPGH, and NKVD. At His-597 the chain carries Diphthamide.

It belongs to the TRAFAC class translation factor GTPase superfamily. Classic translation factor GTPase family. EF-G/EF-2 subfamily.

Its subcellular location is the cytoplasm. In terms of biological role, catalyzes the GTP-dependent ribosomal translocation step during translation elongation. During this step, the ribosome changes from the pre-translocational (PRE) to the post-translocational (POST) state as the newly formed A-site-bound peptidyl-tRNA and P-site-bound deacylated tRNA move to the P and E sites, respectively. Catalyzes the coordinated movement of the two tRNA molecules, the mRNA and conformational changes in the ribosome. This Methanoregula boonei (strain DSM 21154 / JCM 14090 / 6A8) protein is Elongation factor 2.